Consider the following 343-residue polypeptide: Ferredoxin--NADP reductase (343 aa).

The FAD site is built by C18, D37, Q45, Y50, V90, F125, D290, and T331.

This sequence belongs to the ferredoxin--NADP reductase type 2 family. Homodimer. It depends on FAD as a cofactor.

The enzyme catalyses 2 reduced [2Fe-2S]-[ferredoxin] + NADP(+) + H(+) = 2 oxidized [2Fe-2S]-[ferredoxin] + NADPH. The sequence is that of Ferredoxin--NADP reductase from Parvibaculum lavamentivorans (strain DS-1 / DSM 13023 / NCIMB 13966).